A 456-amino-acid chain; its full sequence is Exodeoxyribonuclease 7 large subunit (456 aa).

This sequence belongs to the XseA family. In terms of assembly, heterooligomer composed of large and small subunits.

The protein resides in the cytoplasm. The catalysed reaction is Exonucleolytic cleavage in either 5'- to 3'- or 3'- to 5'-direction to yield nucleoside 5'-phosphates.. Its function is as follows. Bidirectionally degrades single-stranded DNA into large acid-insoluble oligonucleotides, which are then degraded further into small acid-soluble oligonucleotides. This is Exodeoxyribonuclease 7 large subunit from Shigella boydii serotype 18 (strain CDC 3083-94 / BS512).